A 130-amino-acid chain; its full sequence is Histone H2A type 3 (130 aa).

The disordered stretch occupies residues 1-22 (MSGRGKQGGKARAKAKSRSSRA). The residue at position 2 (Ser-2) is an N-acetylserine. The residue at position 2 (Ser-2) is a Phosphoserine; by RPS6KA5. Arg-4 carries the post-translational modification Citrulline; alternate. At Arg-4 the chain carries Symmetric dimethylarginine; by PRMT5; alternate. Lys-6 carries the post-translational modification N6-(2-hydroxyisobutyryl)lysine. A compositionally biased stretch (basic residues) spans 7–19 (QGGKARAKAKSRS). Lys-10 is subject to N6-(2-hydroxyisobutyryl)lysine; alternate. An N6-(beta-hydroxybutyryl)lysine; alternate mark is found at Lys-10 and Lys-14. Position 10 is an N6-lactoyllysine; alternate (Lys-10). The residue at position 10 (Lys-10) is an N6-succinyllysine; alternate. Lys-14 is covalently cross-linked (Glycyl lysine isopeptide (Lys-Gly) (interchain with G-Cter in ubiquitin); alternate). A Glycyl lysine isopeptide (Lys-Gly) (interchain with G-Cter in ubiquitin) cross-link involves residue Lys-16. Residue Lys-37 is modified to N6-(2-hydroxyisobutyryl)lysine; alternate. Position 37 is an N6-(beta-hydroxybutyryl)lysine; alternate (Lys-37). Lys-37 carries the N6-crotonyllysine; alternate modification. An N6-(2-hydroxyisobutyryl)lysine mark is found at Lys-75 and Lys-76. An N6-(2-hydroxyisobutyryl)lysine; alternate modification is found at Lys-96. Lys-96 carries the post-translational modification N6-(beta-hydroxybutyryl)lysine; alternate. Lys-96 is subject to N6-succinyllysine; alternate. Lys-96 bears the N6-glutaryllysine; alternate mark. An N5-methylglutamine modification is found at Gln-105. Lys-119 is subject to N6-(2-hydroxyisobutyryl)lysine; alternate. Lys-119 carries the N6-(beta-hydroxybutyryl)lysine; alternate modification. Residues Lys-119 and Lys-120 each carry the N6-crotonyllysine; alternate modification. 2 positions are modified to N6-glutaryllysine; alternate: Lys-119 and Lys-120. A Glycyl lysine isopeptide (Lys-Gly) (interchain with G-Cter in ubiquitin); alternate cross-link involves residue Lys-120. Thr-121 is modified (phosphothreonine; by DCAF1). Lys-126 is modified (N6-crotonyllysine; alternate). Residue Lys-126 is modified to N6-glutaryllysine; alternate.

The protein belongs to the histone H2A family. As to quaternary structure, the nucleosome is a histone octamer containing two molecules each of H2A, H2B, H3 and H4 assembled in one H3-H4 heterotetramer and two H2A-H2B heterodimers. The octamer wraps approximately 147 bp of DNA. Deiminated on Arg-4 in granulocytes upon calcium entry. In terms of processing, monoubiquitination of Lys-120 (H2AK119Ub) by RING1, TRIM37 and RNF2/RING2 complex gives a specific tag for epigenetic transcriptional repression and participates in X chromosome inactivation of female mammals. It is involved in the initiation of both imprinted and random X inactivation. Ubiquitinated H2A is enriched in inactive X chromosome chromatin. Ubiquitination of H2A functions downstream of methylation of 'Lys-27' of histone H3 (H3K27me). H2AK119Ub by RNF2/RING2 can also be induced by ultraviolet and may be involved in DNA repair. Monoubiquitination of Lys-120 (H2AK119Ub) by TRIM37 may promote transformation of cells in a number of breast cancers. Following DNA double-strand breaks (DSBs), it is ubiquitinated through 'Lys-63' linkage of ubiquitin moieties by the E2 ligase UBE2N and the E3 ligases RNF8 and RNF168, leading to the recruitment of repair proteins to sites of DNA damage. Ubiquitination at Lys-14 and Lys-16 (H2AK13Ub and H2AK15Ub, respectively) in response to DNA damage is initiated by RNF168 that mediates monoubiquitination at these 2 sites, and 'Lys-63'-linked ubiquitin are then conjugated to monoubiquitin; RNF8 is able to extend 'Lys-63'-linked ubiquitin chains in vitro. Deubiquitinated by USP51 at Lys-14 and Lys-16 (H2AK13Ub and H2AK15Ub, respectively) after damaged DNA is repaired. H2AK119Ub and ionizing radiation-induced 'Lys-63'-linked ubiquitination (H2AK13Ub and H2AK15Ub) are distinct events. Post-translationally, phosphorylation on Ser-2 (H2AS1ph) is enhanced during mitosis. Phosphorylation on Ser-2 by RPS6KA5/MSK1 directly represses transcription. Acetylation of H3 inhibits Ser-2 phosphorylation by RPS6KA5/MSK1. Phosphorylation at Thr-121 (H2AT120ph) by DCAF1 is present in the regulatory region of many tumor suppresor genes and down-regulates their transcription. Glutamine methylation at Gln-105 (H2AQ104me) by FBL is specifically dedicated to polymerase I. It is present at 35S ribosomal DNA locus and impairs binding of the FACT complex. In terms of processing, symmetric dimethylation on Arg-4 by the PRDM1/PRMT5 complex may play a crucial role in the germ-cell lineage. Post-translationally, crotonylation (Kcr) is specifically present in male germ cells and marks testis-specific genes in post-meiotic cells, including X-linked genes that escape sex chromosome inactivation in haploid cells. Crotonylation marks active promoters and enhancers and confers resistance to transcriptional repressors. It is also associated with post-meiotically activated genes on autosomes. Lactylated in macrophages by EP300/P300 by using lactoyl-CoA directly derived from endogenous or exogenous lactate, leading to stimulates gene transcription.

The protein resides in the nucleus. Its subcellular location is the chromosome. Its function is as follows. Core component of nucleosome. Nucleosomes wrap and compact DNA into chromatin, limiting DNA accessibility to the cellular machineries which require DNA as a template. Histones thereby play a central role in transcription regulation, DNA repair, DNA replication and chromosomal stability. DNA accessibility is regulated via a complex set of post-translational modifications of histones, also called histone code, and nucleosome remodeling. The chain is Histone H2A type 3 from Homo sapiens (Human).